A 551-amino-acid polypeptide reads, in one-letter code: ATP-dependent DNA helicase XPD (551 aa).

Residues 1–228 (MLKLRDWQEK…KLLNQLREVV (228 aa)) form the Helicase ATP-binding domain. 29-36 (APTGSGKT) is an ATP binding site. Residues Cys88, Cys102, Cys105, and Cys137 each coordinate [4Fe-4S] cluster. Positions 180–183 (DEAH) match the DEAH box motif.

Belongs to the helicase family. RAD3/XPD subfamily. In terms of assembly, monomer. Requires [4Fe-4S] cluster as cofactor.

The catalysed reaction is Couples ATP hydrolysis with the unwinding of duplex DNA at the replication fork by translocating in the 5'-3' direction. This creates two antiparallel DNA single strands (ssDNA). The leading ssDNA polymer is the template for DNA polymerase III holoenzyme which synthesizes a continuous strand.. It catalyses the reaction ATP + H2O = ADP + phosphate + H(+). Its function is as follows. ATP-dependent 5'-3' DNA helicase. Thought to be involved in nucleotide excision repair (NER) of DNA. This chain is ATP-dependent DNA helicase XPD, found in Sulfolobus acidocaldarius (strain ATCC 33909 / DSM 639 / JCM 8929 / NBRC 15157 / NCIMB 11770).